Consider the following 561-residue polypeptide: Rho guanine nucleotide exchange factor 9 (561 aa).

Residues 53 to 112 (DSIVSAEAVWDHVTMANRELAFKAGDVIKVLDASNKDWWWGQIDDEEGWFPASFVRLWVN) form the SH3 domain. The interval 145–155 (RDQMRANVINE) is interaction with GPHN. The 185-residue stretch at 148–332 (MRANVINEIM…RNVTQQINER (185 aa)) folds into the DH domain. The PH domain maps to 363–470 (ELIYTGEMAW…WLRAFREERK (108 aa)). The interval 499 to 524 (KQKGVNSARSVPPSYPPPQDPLNQGQ) is disordered. A Phosphoserine modification is found at Ser547.

Interacts with GPHN.

The protein resides in the cytoplasm. Its subcellular location is the postsynaptic density. Its function is as follows. Acts as a guanine nucleotide exchange factor (GEF) for CDC42. Promotes formation of GPHN clusters. This chain is Rho guanine nucleotide exchange factor 9 (ARHGEF9), found in Bos taurus (Bovine).